Consider the following 321-residue polypeptide: Arginine-hydroxylase NDUFAF5, mitochondrial (321 aa).

The N-terminal 25 residues, Met1–Asn25, are a transit peptide targeting the mitochondrion.

This sequence belongs to the methyltransferase superfamily. Interacts with NDUFS7.

The protein localises to the mitochondrion inner membrane. In terms of biological role, arginine hydroxylase that mediates hydroxylation of 'Arg-111' of NDUFS7 and is involved in the assembly of mitochondrial NADH:ubiquinone oxidoreductase complex (complex I, MT-ND1) at early stages. May also have methyltransferase activity. The polypeptide is Arginine-hydroxylase NDUFAF5, mitochondrial (Danio rerio (Zebrafish)).